A 170-amino-acid chain; its full sequence is Thialysine N-epsilon-acetyltransferase (170 aa).

One can recognise an N-acetyltransferase domain in the interval 4–166 (VLIREAKEGD…FRFEGEAMRE (163 aa)). 27-28 (YE) provides a ligand contact to substrate. The residue at position 29 (lysine 29) is an N6-acetyllysine. Glutamate 92 contacts substrate. Residues 94-96 (IYV), 102-107 (GQGIGS), 133-135 (NKK), and tyrosine 140 each bind acetyl-CoA. Tyrosine 140 serves as the catalytic Proton donor. Substrate is bound at residue glutamate 152.

Belongs to the acetyltransferase family. As to quaternary structure, homodimer.

The protein resides in the cytoplasm. The catalysed reaction is S-(2-aminoethyl)-L-cysteine + acetyl-CoA = S-(2-acetamidoethyl)-L-cysteine + CoA + H(+). It carries out the reaction an alkane-alpha,omega-diamine + acetyl-CoA = an N-acetylalkane-alpha,omega-diamine + CoA + H(+). Catalyzes the N-acetylation of the amino acid thialysine (S-(2-aminoethyl)-L-cysteine), a L-lysine analog with the 4-methylene group substituted with a sulfur. May also catalyze acetylation of polyamines, such as norspermidine, spermidine or spermine. However, ability to acetylate polyamines is weak, suggesting that it does not act as a diamine acetyltransferase in vivo. The polypeptide is Thialysine N-epsilon-acetyltransferase (Sus scrofa (Pig)).